A 571-amino-acid polypeptide reads, in one-letter code: GABA-specific permease (571 aa).

At 1–73 (MSMSSKNENK…IGYKQELKRQ (73 aa)) the chain is on the cytoplasmic side. A helical membrane pass occupies residues 74-94 (FSTLQVFGIAFSIMGLLPSIA). The Vacuolar segment spans residues 95 to 105 (SVMGGGLGGGP). The helical transmembrane segment at 106-126 (ATLVWGWFVAAFFILLVGITM) threads the bilayer. At 127-153 (AEHASSIPTAGGLYYWTYYYAPEGYKE) the chain is on the cytoplasmic side. A helical transmembrane segment spans residues 154-174 (IISFIIGCSNSLALAAGVCSI). Residues 175-198 (DYGLAEEIAAAVTLTKDGNFEVTS) are Vacuolar-facing. Residues 199-219 (GKLYGIFAGAVVVMCICTCVA) traverse the membrane as a helical segment. Residues 220 to 228 (SGAIARLQT) lie on the Cytoplasmic side of the membrane. Residues 229-249 (LSIFANLFIIVLLFIALPIGT) form a helical membrane-spanning segment. Over 250–271 (KHRMGGFNDGDFIFGKYENLSD) the chain is Vacuolar. A helical membrane pass occupies residues 272–292 (WNNGWQFCLAGFMPAVWTIGS). Over 293–312 (FDSCVHQSEEAKDAKKSVPI) the chain is Cytoplasmic. The helical transmembrane segment at 313–333 (GIISSIAVCWILGWLIIICLM) threads the bilayer. Topologically, residues 334-364 (ACINPDIDSVLDSKYGFALAQIIYDSLGKKW) are vacuolar. The helical transmembrane segment at 365–385 (AIAFMSLIAFCQFLMGASITT) threads the bilayer. The Cytoplasmic portion of the chain corresponds to 386-416 (AVSRQVWAFSRDNGLPLSKYIKRVDSKYSVP). A helical membrane pass occupies residues 417 to 437 (FFAILAACVGSLILGLLCLID). Residues 438-441 (DAAT) are Vacuolar-facing. The chain crosses the membrane as a helical span at residues 442–462 (DALFSLAVAGNNLAWSTPTVF). Over 463 to 482 (RLTSGRDLFRPGPFYLGKIW) the chain is Cytoplasmic. Residues 483–503 (SPIVAWTGVAFQLFIIILVMF) form a helical membrane-spanning segment. Residues 504–514 (PSQQHGITKST) are Vacuolar-facing. Residues 515 to 535 (MNYACVIGPGIWILAGIYYKV) traverse the membrane as a helical segment. At 536–571 (YKKKYYHGPATNLSDDDYTEAVGADVIDTIMSKQEP) the chain is on the cytoplasmic side.

This sequence belongs to the amino acid-polyamine-organocation (APC) superfamily. Amino acid/choline transporter (ACT) (TC 2.A.3.4) family.

It is found in the vacuole membrane. Its function is as follows. Required for high-affinity, high-specificity GABA transport. Also transports putrescine. This is GABA-specific permease (UGA4) from Saccharomyces cerevisiae (strain ATCC 204508 / S288c) (Baker's yeast).